We begin with the raw amino-acid sequence, 371 residues long: DNA replication and repair protein RecF (371 aa).

30 to 37 contacts ATP; the sequence is GENAQGKT.

This sequence belongs to the RecF family.

It localises to the cytoplasm. In terms of biological role, the RecF protein is involved in DNA metabolism; it is required for DNA replication and normal SOS inducibility. RecF binds preferentially to single-stranded, linear DNA. It also seems to bind ATP. This Staphylococcus epidermidis (strain ATCC 35984 / DSM 28319 / BCRC 17069 / CCUG 31568 / BM 3577 / RP62A) protein is DNA replication and repair protein RecF.